Consider the following 259-residue polypeptide: Ubiquinone/menaquinone biosynthesis C-methyltransferase UbiE (259 aa).

S-adenosyl-L-methionine-binding positions include Thr-82, Asp-103, and 131-132 (NA).

It belongs to the class I-like SAM-binding methyltransferase superfamily. MenG/UbiE family.

It carries out the reaction a 2-demethylmenaquinol + S-adenosyl-L-methionine = a menaquinol + S-adenosyl-L-homocysteine + H(+). The enzyme catalyses a 2-methoxy-6-(all-trans-polyprenyl)benzene-1,4-diol + S-adenosyl-L-methionine = a 5-methoxy-2-methyl-3-(all-trans-polyprenyl)benzene-1,4-diol + S-adenosyl-L-homocysteine + H(+). It participates in quinol/quinone metabolism; menaquinone biosynthesis; menaquinol from 1,4-dihydroxy-2-naphthoate: step 2/2. It functions in the pathway cofactor biosynthesis; ubiquinone biosynthesis. Its function is as follows. Methyltransferase required for the conversion of demethylmenaquinol (DMKH2) to menaquinol (MKH2) and the conversion of 2-polyprenyl-6-methoxy-1,4-benzoquinol (DDMQH2) to 2-polyprenyl-3-methyl-6-methoxy-1,4-benzoquinol (DMQH2). In Agrobacterium fabrum (strain C58 / ATCC 33970) (Agrobacterium tumefaciens (strain C58)), this protein is Ubiquinone/menaquinone biosynthesis C-methyltransferase UbiE.